A 220-amino-acid polypeptide reads, in one-letter code: Metalloproteinase inhibitor 2 (220 aa).

Residues 1–26 (MGAAARSLRLALGLLLLATLLRPADA) form the signal peptide. Cys-27 contacts Zn(2+). Involved in metalloproteinase-binding regions lie at residues 27–30 (CSCS) and 95–96 (SA). Disulfide bonds link Cys-27–Cys-98, Cys-29–Cys-127, Cys-39–Cys-152, Cys-154–Cys-201, Cys-159–Cys-164, and Cys-172–Cys-193. Residues 27 to 152 (CSCSPVHPQQ…SLNHRYQMGC (126 aa)) enclose the NTR domain.

This sequence belongs to the protease inhibitor I35 (TIMP) family. In terms of assembly, interacts (via the C-terminal) with MMP2 (via the C-terminal PEX domain); the interaction inhibits the MMP2 activity. Post-translationally, the activity of TIMP2 is dependent on the presence of disulfide bonds.

It localises to the secreted. Its function is as follows. Complexes with metalloproteinases (such as collagenases) and irreversibly inactivates them by binding to their catalytic zinc cofactor. This is Metalloproteinase inhibitor 2 (Timp2) from Rattus norvegicus (Rat).